Reading from the N-terminus, the 338-residue chain is Bacteriochlorophyllide d C-20 methyltransferase (338 aa).

Glutamate 147 is an S-adenosyl-L-methionine binding site. Residue histidine 150 participates in substrate binding. Residues glycine 177, asparagine 200, 227–228 (DI), and 242–243 (CR) contribute to the S-adenosyl-L-methionine site. Tyrosine 246 functions as the Nucleophile in the catalytic mechanism. Histidine 290 is an a bacteriochlorophyll d binding site.

It belongs to the class I-like SAM-binding methyltransferase superfamily. Cation-independent O-methyltransferase family. In terms of assembly, homodimer.

The catalysed reaction is a bacteriochlorophyllide d + S-adenosyl-L-methionine = a bacteriochlorophyllide c + S-adenosyl-L-homocysteine + H(+). It participates in porphyrin-containing compound metabolism; bacteriochlorophyll biosynthesis (light-independent). In terms of biological role, involved in the biosynthesis of the major light-harvesting pigment bacteriochlorophyll c (BChlc), which confers a significant competitive advantage to green sulfur bacteria living at limiting red and near-infrared light intensities. Catalyzes the methylation at the C-20 position of the cyclic tetrapyrrole chlorin of bacteriochlorophyll d (BChld) to produce bacteriochlorophyll c (BChlc) using S-adenosylmethionine (SAM) as a methyl source. This chain is Bacteriochlorophyllide d C-20 methyltransferase, found in Chlorobaculum tepidum (strain ATCC 49652 / DSM 12025 / NBRC 103806 / TLS) (Chlorobium tepidum).